The following is a 342-amino-acid chain: Ketol-acid reductoisomerase (NADP(+)) (342 aa).

The region spanning 2–182 (AELFYDDDAD…GGLRAAGIKT (181 aa)) is the KARI N-terminal Rossmann domain. NADP(+) is bound by residues 25–28 (YGSQ), Arg-48, Ser-51, Ser-53, and 83–86 (DQHQ). His-108 is an active-site residue. NADP(+) is bound at residue Gly-134. The KARI C-terminal knotted domain occupies 183-328 (TFTEETETDL…RELRKLFAWV (146 aa)). Mg(2+)-binding residues include Asp-191, Glu-195, Glu-227, and Glu-231. Ser-252 is a substrate binding site.

This sequence belongs to the ketol-acid reductoisomerase family. It depends on Mg(2+) as a cofactor.

It carries out the reaction (2R)-2,3-dihydroxy-3-methylbutanoate + NADP(+) = (2S)-2-acetolactate + NADPH + H(+). It catalyses the reaction (2R,3R)-2,3-dihydroxy-3-methylpentanoate + NADP(+) = (S)-2-ethyl-2-hydroxy-3-oxobutanoate + NADPH + H(+). Its pathway is amino-acid biosynthesis; L-isoleucine biosynthesis; L-isoleucine from 2-oxobutanoate: step 2/4. It functions in the pathway amino-acid biosynthesis; L-valine biosynthesis; L-valine from pyruvate: step 2/4. Functionally, involved in the biosynthesis of branched-chain amino acids (BCAA). Catalyzes an alkyl-migration followed by a ketol-acid reduction of (S)-2-acetolactate (S2AL) to yield (R)-2,3-dihydroxy-isovalerate. In the isomerase reaction, S2AL is rearranged via a Mg-dependent methyl migration to produce 3-hydroxy-3-methyl-2-ketobutyrate (HMKB). In the reductase reaction, this 2-ketoacid undergoes a metal-dependent reduction by NADPH to yield (R)-2,3-dihydroxy-isovalerate. This chain is Ketol-acid reductoisomerase (NADP(+)), found in Beutenbergia cavernae (strain ATCC BAA-8 / DSM 12333 / CCUG 43141 / JCM 11478 / NBRC 16432 / NCIMB 13614 / HKI 0122).